Here is a 789-residue protein sequence, read N- to C-terminus: Larval serum protein 1 beta chain (789 aa).

Residues 1–16 (MKIAIALLACLGLAAA) form the signal peptide.

The protein belongs to the hemocyanin family. Heterohexamer, composed of three subunits, alpha, beta and gamma. Larval hemolymph.

The protein localises to the secreted. Its subcellular location is the extracellular space. Larval storage protein (LSP) which may serve as a store of amino acids for synthesis of adult proteins. The sequence is that of Larval serum protein 1 beta chain (Lsp1beta) from Drosophila melanogaster (Fruit fly).